The following is a 223-amino-acid chain: Leucyl/phenylalanyl-tRNA--protein transferase (223 aa).

The protein belongs to the L/F-transferase family.

The protein localises to the cytoplasm. It catalyses the reaction N-terminal L-lysyl-[protein] + L-leucyl-tRNA(Leu) = N-terminal L-leucyl-L-lysyl-[protein] + tRNA(Leu) + H(+). The catalysed reaction is N-terminal L-arginyl-[protein] + L-leucyl-tRNA(Leu) = N-terminal L-leucyl-L-arginyl-[protein] + tRNA(Leu) + H(+). It carries out the reaction L-phenylalanyl-tRNA(Phe) + an N-terminal L-alpha-aminoacyl-[protein] = an N-terminal L-phenylalanyl-L-alpha-aminoacyl-[protein] + tRNA(Phe). Functions in the N-end rule pathway of protein degradation where it conjugates Leu, Phe and, less efficiently, Met from aminoacyl-tRNAs to the N-termini of proteins containing an N-terminal arginine or lysine. The polypeptide is Leucyl/phenylalanyl-tRNA--protein transferase (Dinoroseobacter shibae (strain DSM 16493 / NCIMB 14021 / DFL 12)).